The sequence spans 218 residues: 2-phospho-L-lactate guanylyltransferase (218 aa).

The protein belongs to the CofC family. As to quaternary structure, homodimer.

It carries out the reaction (2S)-2-phospholactate + GTP + H(+) = (2S)-lactyl-2-diphospho-5'-guanosine + diphosphate. Its pathway is cofactor biosynthesis; coenzyme F420 biosynthesis. In terms of biological role, guanylyltransferase that catalyzes the activation of (2S)-2-phospholactate (2-PL) as (2S)-lactyl-2-diphospho-5'-guanosine, via the condensation of 2-PL with GTP. It is involved in the biosynthesis of coenzyme F420, a hydride carrier cofactor. The chain is 2-phospho-L-lactate guanylyltransferase from Methanocaldococcus fervens (strain DSM 4213 / JCM 15782 / AG86) (Methanococcus fervens).